Here is a 489-residue protein sequence, read N- to C-terminus: Serine/threonine-protein kinase dyf-5 (489 aa).

Positions 11–291 constitute a Protein kinase domain; that stretch reads YLMTKRLGDG…ANQSLRYKYF (281 aa). Residues 17–25 and Lys40 each bind ATP; that span reads LGDGTFGEV. Residue Asp132 is the Proton acceptor of the active site. 2 disordered regions span residues 366 to 385 and 452 to 489; these read EKSD…KPTA and QTGP…KYVK. Residues 458-473 show a composition bias toward low complexity; the sequence is SNQTNNHSANNSHSPN.

The protein belongs to the protein kinase superfamily. CMGC Ser/Thr protein kinase family. RCK subfamily. Mg(2+) serves as cofactor. In terms of tissue distribution, expressed in head neurons including amphid and labial sensory neurons and 3 pairs of neurons in the tail including phasmid sensory neurons. In male, expressed in the tail including the sensory rays and the spicule.

The protein localises to the perikaryon. The protein resides in the cell projection. It localises to the dendrite. Its subcellular location is the axon. It is found in the cilium. It catalyses the reaction L-seryl-[protein] + ATP = O-phospho-L-seryl-[protein] + ADP + H(+). The catalysed reaction is L-threonyl-[protein] + ATP = O-phospho-L-threonyl-[protein] + ADP + H(+). Functionally, serine/threonine-protein kinase which is required for ciliogenesis. Regulates the length and the morphology of sensory neuron cilia. In addition, plays a role in the anterograde intraflagellar transport (IFT) in the cilia by regulating the undocking of kinesin-II motor complex (composed of klp-11, klp-20 and kap-1) before reaching the distal segment and the docking of kinesin motor osm-3 onto IFT cargos. This is Serine/threonine-protein kinase dyf-5 from Caenorhabditis elegans.